The chain runs to 828 residues: Phenylalanine--tRNA ligase beta subunit (828 aa).

The 119-residue stretch at 43-161 (LSKNTNLVVG…DQIALGSNAL (119 aa)) folds into the tRNA-binding domain. The segment at 203–230 (KKKEKKTINYKTKNSKDQTNRKTTPKLN) is disordered. One can recognise a B5 domain in the interval 436–519 (RTNPTISLDL…RFYGCHKLPP (84 aa)). D497, D503, and D507 together coordinate Mg(2+). In terms of domain architecture, FDX-ACB spans 736–828 (PKFPTVIRDL…LIKHFRIEIR (93 aa)).

The protein belongs to the phenylalanyl-tRNA synthetase beta subunit family. Type 1 subfamily. In terms of assembly, tetramer of two alpha and two beta subunits. It depends on Mg(2+) as a cofactor.

It is found in the cytoplasm. The catalysed reaction is tRNA(Phe) + L-phenylalanine + ATP = L-phenylalanyl-tRNA(Phe) + AMP + diphosphate + H(+). This chain is Phenylalanine--tRNA ligase beta subunit, found in Aster yellows witches'-broom phytoplasma (strain AYWB).